Here is a 173-residue protein sequence, read N- to C-terminus: Lens fiber membrane intrinsic protein (173 aa).

Topologically, residues 1 to 3 (MYS) are cytoplasmic. A helical transmembrane segment spans residues 4–24 (FMGGGLFCAWVGTILLVVAMA). The Extracellular segment spans residues 25 to 66 (TDHWMQYRLSGSFAHQGLWRYCLGNKCYLQTDSIAYWNATRA). 2 C-linked (Man) tryptophan glycosylation sites follow: tryptophan 43 and tryptophan 61. Asparagine 62 carries an N-linked (GlcNAc...) asparagine glycan. Residues 67-87 (FMILSALCAISGIIMGIMAFA) form a helical membrane-spanning segment. At 88–98 (HQPTFSRISRP) the chain is on the cytoplasmic side. The chain crosses the membrane as a helical span at residues 99–119 (FSAGIMFFSSTLFVVLALAIY). Topologically, residues 120–140 (TGVTVSFLGRRFGDWRFSWSY) are extracellular. Residues 141-161 (ILGWVAVLMTFFAGIFYMCAY) form a helical membrane-spanning segment. Residues 162–173 (RVHECRRLSTPR) are Cytoplasmic-facing. Serine 170 bears the Phosphoserine mark. Threonine 171 is subject to Phosphothreonine.

This sequence belongs to the PMP-22/EMP/MP20 family. Seems to be associated with itself or another lens membrane component via disulfide bonds. In terms of tissue distribution, eye lens specific.

It is found in the membrane. Present in the thicker 16-17 nm junctions of mammalian lens fiber cells, where it may contribute to cell junctional organization. Acts as a receptor for calmodulin. May play an important role in both lens development and cataractogenesis. This chain is Lens fiber membrane intrinsic protein (LIM2), found in Homo sapiens (Human).